A 39-amino-acid chain; its full sequence is Photosystem II reaction center protein L (39 aa).

A helical transmembrane segment spans residues 18–38 (SLYLGLLFVFVTGVLMSSYFF).

It belongs to the PsbL family. As to quaternary structure, PSII is composed of 1 copy each of membrane proteins PsbA, PsbB, PsbC, PsbD, PsbE, PsbF, PsbH, PsbI, PsbJ, PsbK, PsbL, PsbM, PsbT, PsbX, PsbY, PsbZ, Psb30/Ycf12, peripheral proteins PsbO, CyanoQ (PsbQ), PsbU, PsbV and a large number of cofactors. It forms dimeric complexes.

The protein resides in the cellular thylakoid membrane. Functionally, one of the components of the core complex of photosystem II (PSII). PSII is a light-driven water:plastoquinone oxidoreductase that uses light energy to abstract electrons from H(2)O, generating O(2) and a proton gradient subsequently used for ATP formation. It consists of a core antenna complex that captures photons, and an electron transfer chain that converts photonic excitation into a charge separation. This subunit is found at the monomer-monomer interface and is required for correct PSII assembly and/or dimerization. The sequence is that of Photosystem II reaction center protein L from Parasynechococcus marenigrum (strain WH8102).